Reading from the N-terminus, the 23-residue chain is Acidic phospholipase A2 Ts-A2 (23 aa).

It depends on Ca(2+) as a cofactor. Post-translationally, contains 7 disulfide bonds. In terms of tissue distribution, expressed by the venom gland.

The protein localises to the secreted. The catalysed reaction is a 1,2-diacyl-sn-glycero-3-phosphocholine + H2O = a 1-acyl-sn-glycero-3-phosphocholine + a fatty acid + H(+). Functionally, exhibits moderate hydrolytic activities and prefers the anionic micelles (dPPC with deoxycholate) to the zwitterionic micelles (dPPC with Triton X-100). PLA2 catalyzes the calcium-dependent hydrolysis of the 2-acyl groups in 3-sn-phosphoglycerides. The sequence is that of Acidic phospholipase A2 Ts-A2 from Trimeresurus stejnegeri (Chinese green tree viper).